A 215-amino-acid chain; its full sequence is Cytochrome b6 (215 aa).

A helical transmembrane segment spans residues 32–52; it reads IFYCLGGITLVCFLIQFATGF. C35 is a heme c binding site. H86 and H100 together coordinate heme b. The next 3 membrane-spanning stretches (helical) occupy residues 90-110, 116-136, and 186-206; these read ASMM…TGGF, LTWV…VTGY, and AHTF…FLMI. H187 and H202 together coordinate heme b.

It belongs to the cytochrome b family. PetB subfamily. In terms of assembly, the 4 large subunits of the cytochrome b6-f complex are cytochrome b6, subunit IV (17 kDa polypeptide, PetD), cytochrome f and the Rieske protein, while the 4 small subunits are PetG, PetL, PetM and PetN. The complex functions as a dimer. Heme b serves as cofactor. Heme c is required as a cofactor.

The protein localises to the cellular thylakoid membrane. Component of the cytochrome b6-f complex, which mediates electron transfer between photosystem II (PSII) and photosystem I (PSI), cyclic electron flow around PSI, and state transitions. The polypeptide is Cytochrome b6 (Nostoc punctiforme (strain ATCC 29133 / PCC 73102)).